Reading from the N-terminus, the 258-residue chain is Capsid protein (258 aa).

Positions 3-20 (KRPGDIIISTPGSKVRRR) match the Bipartite nuclear localization signal motif. Positions 41 to 55 (RKRAWMNRPMYRKPM) match the Nuclear localization signal motif. Residues 69–86 (CEGPCKVQSFEQRDDVKH) fold into a zinc finger. A Nuclear export signal motif is present at residues 102–123 (LTHRVGKRFCIKSIYILGKIWM). A Bipartite nuclear localization signal motif is present at residues 202–249 (KRFYRLNHHVTYNHQEAGKYENHTENALLLYMACTHASNPVYATLKIR).

Belongs to the geminiviridae capsid protein family. As to quaternary structure, homomultimer. Binds to single-stranded and double-stranded viral DNA. Interacts (via nuclear localization signals) with host importin alpha-1a.

Its subcellular location is the virion. The protein localises to the host nucleus. Encapsidates the viral DNA into characteristic twinned ('geminate') particles. Binds the genomic viral ssDNA and shuttles it into and out of the cell nucleus. The CP of bipartite geminiviruses is not required for cell-to-cell or systemic movement. The sequence is that of Capsid protein from Hewittia sublobata (Coralbush).